The following is a 302-amino-acid chain: Nucleotide-binding protein Rsph17025_2562 (302 aa).

An ATP-binding site is contributed by 15 to 22 (GPSGAGRT). Position 62–65 (62–65 (DVRN)) interacts with GTP.

It belongs to the RapZ-like family.

In terms of biological role, displays ATPase and GTPase activities. The polypeptide is Nucleotide-binding protein Rsph17025_2562 (Cereibacter sphaeroides (strain ATCC 17025 / ATH 2.4.3) (Rhodobacter sphaeroides)).